We begin with the raw amino-acid sequence, 658 residues long: ATP-dependent RNA helicase MSS116, mitochondrial (658 aa).

The N-terminal 35 residues, 1–35, are a transit peptide targeting the mitochondrion; sequence MFRVTGIATARAVALQPFRAPLGVIRRFGISATAS. Over residues 40 to 79 the composition is skewed to basic and acidic residues; it reads HGHDMQSRNGSRWDSRRQGDRRSSRWEGRGSDREDGERGS. The segment at 40-104 is disordered; it reads HGHDMQSRNG…DGAAREGFSL (65 aa). The Q motif signature appears at 126–154; sequence TLVEEGVLSNELYEMLQSRGFDKLTPVQQ. The Helicase ATP-binding domain occupies 158–343; it reads KPILQTEHDV…NSIMNHAKCL (186 aa). 171–178 is an ATP binding site; sequence AKTGTGKT. The DEAD box motif lies at 284 to 287; sequence DEAD. A Helicase C-terminal domain is found at 372 to 528; the sequence is NITASLYKIR…TFDAAAQELS (157 aa).

This sequence belongs to the DEAD box helicase family. DDX18/HAS1 subfamily.

The protein localises to the mitochondrion matrix. The catalysed reaction is ATP + H2O = ADP + phosphate + H(+). Functionally, ATP-dependent RNA helicase required for mitochondrial splicing of group I and II introns. Also required for efficient mitochondrial translation. In Eremothecium gossypii (strain ATCC 10895 / CBS 109.51 / FGSC 9923 / NRRL Y-1056) (Yeast), this protein is ATP-dependent RNA helicase MSS116, mitochondrial (MSS116).